Reading from the N-terminus, the 121-residue chain is Spermidine export protein MdtJ (121 aa).

Helical transmembrane passes span 1–21, 32–52, 55–75, and 82–102; these read MYIY…GTLS, GGFI…SFAV, IALG…ITLF, and ESLS…IVLI.

This sequence belongs to the drug/metabolite transporter (DMT) superfamily. Small multidrug resistance (SMR) (TC 2.A.7.1) family. MdtJ subfamily. As to quaternary structure, forms a complex with MdtI.

The protein localises to the cell inner membrane. Catalyzes the excretion of spermidine. The sequence is that of Spermidine export protein MdtJ from Escherichia coli O127:H6 (strain E2348/69 / EPEC).